A 157-amino-acid polypeptide reads, in one-letter code: MGVIEFLLALAQDMILAAIPAVGFAMVFNVPVRALRWCALLGSIGHGSRMILMTSGLNIEWSTFMASMLVGTIGIQWSRWYLAHPKVFTVAAVIPMFPGISAYTAMISSVKISQLGYSEPLMITLLTNFLTASSIVGALSIGLSIPGLWLYRKRPRV.

4 helical membrane-spanning segments follow: residues 8 to 28, 50 to 70, 87 to 107, and 129 to 149; these read LALA…AMVF, MILM…SMLV, VFTV…TAMI, and FLTA…PGLW.

The protein belongs to the ThrE exporter (TC 2.A.79) family. As to quaternary structure, the transporter is composed of YjjB and YjjP.

Its subcellular location is the cell inner membrane. Functionally, involved in succinate export with YjjP. Both proteins are required for export. This Shigella flexneri serotype 5b (strain 8401) protein is Probable succinate transporter subunit YjjB.